A 330-amino-acid polypeptide reads, in one-letter code: Probable L-asparaginase (330 aa).

The 325-residue stretch at 6 to 330 folds into the Asparaginase/glutaminase domain; the sequence is PTIALLATGG…EKIQEMFEEY (325 aa). Threonine 16 serves as the catalytic O-isoaspartyl threonine intermediate. Residues serine 62 and 95–96 contribute to the substrate site; that span reads TD.

This sequence belongs to the asparaginase 1 family.

Its subcellular location is the cytoplasm. The enzyme catalyses L-asparagine + H2O = L-aspartate + NH4(+). This chain is Probable L-asparaginase (ansA), found in Helicobacter pylori (strain ATCC 700392 / 26695) (Campylobacter pylori).